The following is a 382-amino-acid chain: Glutaminyl-peptide cyclotransferase-like protein (382 aa).

A helical transmembrane segment spans residues 35-55 (LLPLLLALAVGSAFYTIWSGW). Cys-167 and Cys-191 form a disulfide bridge. Asp-186 contributes to the Zn(2+) binding site. The Proton acceptor role is filled by Glu-225. Zn(2+) is bound at residue Glu-226. The active-site Proton acceptor is Asp-269. Zn(2+) is bound at residue His-351.

Belongs to the glutaminyl-peptide cyclotransferase family.

It is found in the golgi apparatus membrane. The enzyme catalyses N-terminal L-glutaminyl-[peptide] = N-terminal 5-oxo-L-prolyl-[peptide] + NH4(+). In terms of biological role, responsible for the biosynthesis of pyroglutamyl peptides. The chain is Glutaminyl-peptide cyclotransferase-like protein (QPCTL) from Homo sapiens (Human).